The following is a 140-amino-acid chain: Myrosinase 2 (140 aa).

The active-site Nucleophile is arginine 70. N-linked (GlcNAc...) asparagine glycosylation is found at asparagine 114 and asparagine 127.

Belongs to the glycosyl hydrolase 1 family. As to quaternary structure, homodimer.

It catalyses the reaction a thioglucoside + H2O = a sugar + a thiol.. Its activity is regulated as follows. Inhibited by ascorbate. Its function is as follows. Degradation of glucosinolates (glucose residue linked by a thioglucoside bound to an amino acid derivative) to glucose, sulfate and any of the products: thiocyanates, isothiocyanates, nitriles, epithionitriles or oxazolidine-2-thiones. The sequence is that of Myrosinase 2 from Brevicoryne brassicae (Mealy cabbage aphid).